The primary structure comprises 496 residues: Cobyric acid synthase (496 aa).

In terms of domain architecture, GATase cobBQ-type spans D255–W445. C336 (nucleophile) is an active-site residue. H437 is a catalytic residue.

It belongs to the CobB/CobQ family. CobQ subfamily.

It functions in the pathway cofactor biosynthesis; adenosylcobalamin biosynthesis. In terms of biological role, catalyzes amidations at positions B, D, E, and G on adenosylcobyrinic A,C-diamide. NH(2) groups are provided by glutamine, and one molecule of ATP is hydrogenolyzed for each amidation. The chain is Cobyric acid synthase from Parasynechococcus marenigrum (strain WH8102).